Here is a 2030-residue protein sequence, read N- to C-terminus: MWTPTEEEKYGVVICSFRGSVPQGLVLEIGETVQILEKCEGWYRGVSTKKPNVKGIFPANYIHLKKAIVSNRGQYETVVPLEDSIVTEVTATLQEWASLWKQLYVKHKVDLFYKLRHVMNELIDLRRQLLSGHLTQDQVREVKRHITVRLDWGNEHLGLDLVPRKDFEVVDSDQISVSDLYKMHLSSRQSVQQSTSQVDTMRPRHGETCRMPVPHHFFLSLKSFTYNTIGEDTDVFFSLYDMREGKQISERFLVRLNKNGGPRNPEKIERMCALFTDLSSKDMKRDLYIVAHVIRIGRMLLNDSKKGPPHLHYRRPYGCAVLSILDVLQSLTEVKEEKDFVLKVYTCNNESEWSQIHENIIRKSSAKYSAPSASHGLIISLQLLRGDMEQIRRENPMIFNRGLAITRKLGFPDVIMPGDIRNDLYLTLEKGDFERGGKSVQKNIEVTMYVLYADGEILKDCISLGSGEPNRSSYHSFVLYHSNSPRWGEIIKLPIPIDRFRGSHLRFEFRHCSTKDKGEKKLFGFAFSTLMRDDGTTLSDDIHELYVYKCDENSTFNNHALYLGLPCCKEDYNGCPNIPSSLIFQRSTKESFFISTQLSSTKLTQNVDLLALLKWKAFPDRIMDVLGRLRHVSGEEIVKFLQDILDTLFVILDDNTEKYGLLVFQSLVFIINLLRDIKYFHFRPVMDTYIQKHFAGALAYKELIRCLKWYMDCSAELIRQDHIQEAMRALEYLFKFIVQSRILYSRATCGMEEEQFRSSIQELFQSIRFVLSLDSRNSETLLFTQAALLNSFPTIFDELLQMFTVQEVAEFVRGTLGSMPSTVHIGQSMDVVKLQSIARTVDSRLFSFSESRRILLPVVLHHIHLHLRQQKELLICSGILGSIFSIVKTSSLEADVMEEVEMMVESLLDVLLQTLLTIMSKSHAQEAVRGQRCPQCTAEITGEYVSCLLSLLRQMCDTHFQHLLDNFQSKDELKEFLLKIFCVFRNLMKMSVFPRDWMVMRLLTSNIIVTTVQYLSSALHKNFTETDFDFKVWNSYFSLAVLFINQPSLQLEIITSAKRKKILDKYGDMRVMMAYELFSMWQNLGEHKIHFIPGMIGPFLGVTLVPQPEVRNIMIPIFHDMMDWEQRKNGNFKQVEAELIDKLDSMVSEGKGDESYRELFSLLTQLFGPYPSLLEKVEQETWRETGISFVTSVTRLMERLLDYRDCMKGEETENKKIGCTVNLMNFYKSEINKEEMYIRYIHKLCDMHLQAENYTEAAFTLLLYCELLQWEDRPLREFLHYPSQTEWQRKEGLCRKIIHYFNKGKSWEFGIPLCRELACQYESLYDYQSLSWIRKMEASYYDNIMEQQRLEPEFFRVGFYGRKFPFFLRNKEYVCRGHDYERLEAFQQRMLSEFPQAVAMQHPNHPDDAILQCDAQYLQIYAVTPIPDYVDVLQMDRVPDRVKSFYRVNNVRKFRYDRPFHKGPKDKENEFKSLWIERTTLTLTHSLPGISRWFEVERRELVEVSPLENAIQVVENKNQELRSLISQYQHKQVHGNINLLSMCLNGVIDAAVNGGIARYQEAFFDKDYINKHPGDAEKITQLKELMQEQVHVLGVGLAVHEKFVHPEMRPLHKKLIDQFQMMRASLYHEFPGLDKLSPACSGTSTPRGNVLASHSPMSPESIKMTHRHSPMNLMGTGRHSSSSLSSHASSEAGNMVMLGDGSMGDAPEDLYHHMQLAYPNPRYQGSVTNVSVLSSSQASPSSSSLSSTHSAPSQMITSAPSSARGSPSLPDKYRHAREMMLLLPTYRDRPSSAMYPAAILENGQPPNFQRALFQQVVGACKPCSDPNLSVAEKGHYSLHFDAFHHPLGDTPPALPARTLRKSPLHPIPASPTSPQSGLDGSNSTLSGSASSGVSSLSESNFGHSSEAPPRTDTMDSMPSQAWNADEDLEPPYLPVHYSLSESAVLDSIKAQPCRSHSAPGCVIPQDPMDPPALPPKPYHPRLPALEHDEGVLLREETERPRGLHRKAPLPPGSAKEEQARMAWEHGRGEQ.

One can recognise an SH3 domain in the interval 6-67; the sequence is EEEKYGVVIC…PANYIHLKKA (62 aa). The region spanning 421–599 is the C2 DOCK-type domain; the sequence is RNDLYLTLEK…ESFFISTQLS (179 aa). In terms of domain architecture, DOCKER spans 1228 to 1635; sequence KSEINKEEMY…LYHEFPGLDK (408 aa). Disordered regions lie at residues 1641–1662, 1734–1771, 1849–1927, and 1951–2030; these read SGTSTPRGNVLASHSPMSPESI, SSSQASPSSSSLSSTHSAPSQMITSAPSSARGSPSLPD, DTPP…ADED, and QPCR…RGEQ. Phosphoserine is present on Ser-1658. Positions 1734-1754 are enriched in low complexity; sequence SSSQASPSSSSLSSTHSAPSQ. The span at 1755–1765 shows a compositional bias: polar residues; the sequence is MITSAPSSARG. Residues 1880–1902 show a composition bias toward low complexity; the sequence is GSNSTLSGSASSGVSSLSESNFG. The segment covering 1967–1977 has biased composition (pro residues); that stretch reads PMDPPALPPKP. Residues 1970 to 1976 carry the SH3-binding motif; sequence PPALPPK. Composition is skewed to basic and acidic residues over residues 1984–2001 and 2014–2030; these read ALEHDEGVLLREETERPR and AKEEQARMAWEHGRGEQ.

Belongs to the DOCK family. Interacts with presenilin proteins PSEN1 and PSEN2. Interacts with CRK. In normal brains, it is localized in the neuropil, and occasionally in the pyramidal cells, while in Alzheimer disease brains, it is associated with neurofibrillary tangles.

The protein resides in the cytoplasm. Potential guanine nucleotide exchange factor (GEF). GEF proteins activate some small GTPases by exchanging bound GDP for free GTP. Its interaction with presenilin proteins as well as its ability to stimulate Tau/MAPT phosphorylation suggest that it may be involved in Alzheimer disease. Ectopic expression in nerve cells decreases the secretion of amyloid-beta APBA1 protein and lowers the rate of cell-substratum adhesion, suggesting that it may affect the function of some small GTPase involved in the regulation of actin cytoskeleton or cell adhesion receptors. This chain is Dedicator of cytokinesis protein 3 (DOCK3), found in Homo sapiens (Human).